A 202-amino-acid polypeptide reads, in one-letter code: FMN-dependent NADH:quinone oxidoreductase (202 aa).

Residues Ser-10 and 95-98 (MYNF) each bind FMN.

It belongs to the azoreductase type 1 family. Homodimer. Requires FMN as cofactor.

It carries out the reaction 2 a quinone + NADH + H(+) = 2 a 1,4-benzosemiquinone + NAD(+). The enzyme catalyses N,N-dimethyl-1,4-phenylenediamine + anthranilate + 2 NAD(+) = 2-(4-dimethylaminophenyl)diazenylbenzoate + 2 NADH + 2 H(+). In terms of biological role, quinone reductase that provides resistance to thiol-specific stress caused by electrophilic quinones. Functionally, also exhibits azoreductase activity. Catalyzes the reductive cleavage of the azo bond in aromatic azo compounds to the corresponding amines. This is FMN-dependent NADH:quinone oxidoreductase from Pseudoalteromonas atlantica (strain T6c / ATCC BAA-1087).